The chain runs to 229 residues: Cytochrome c oxidase subunit 2 (229 aa).

At methionine 1–histidine 26 the chain is on the mitochondrial intermembrane side. The helical transmembrane segment at alanine 27–asparagine 48 threads the bilayer. Over serine 49–glutamate 62 the chain is Mitochondrial matrix. A helical transmembrane segment spans residues methionine 63–arginine 82. The Mitochondrial intermembrane portion of the chain corresponds to leucine 83–serine 229. Cu cation contacts are provided by histidine 161, cysteine 196, glutamate 198, cysteine 200, histidine 204, and methionine 207. Position 198 (glutamate 198) interacts with Mg(2+).

It belongs to the cytochrome c oxidase subunit 2 family. In terms of assembly, component of the cytochrome c oxidase (complex IV, CIV), a multisubunit enzyme composed of a catalytic core of 3 subunits and several supernumerary subunits. The complex exists as a monomer or a dimer and forms supercomplexes (SCs) in the inner mitochondrial membrane with ubiquinol-cytochrome c oxidoreductase (cytochrome b-c1 complex, complex III, CIII). Cu cation serves as cofactor.

It is found in the mitochondrion inner membrane. The catalysed reaction is 4 Fe(II)-[cytochrome c] + O2 + 8 H(+)(in) = 4 Fe(III)-[cytochrome c] + 2 H2O + 4 H(+)(out). Its function is as follows. Component of the cytochrome c oxidase, the last enzyme in the mitochondrial electron transport chain which drives oxidative phosphorylation. The respiratory chain contains 3 multisubunit complexes succinate dehydrogenase (complex II, CII), ubiquinol-cytochrome c oxidoreductase (cytochrome b-c1 complex, complex III, CIII) and cytochrome c oxidase (complex IV, CIV), that cooperate to transfer electrons derived from NADH and succinate to molecular oxygen, creating an electrochemical gradient over the inner membrane that drives transmembrane transport and the ATP synthase. Cytochrome c oxidase is the component of the respiratory chain that catalyzes the reduction of oxygen to water. Electrons originating from reduced cytochrome c in the intermembrane space (IMS) are transferred via the dinuclear copper A center (CU(A)) of subunit 2 and heme A of subunit 1 to the active site in subunit 1, a binuclear center (BNC) formed by heme A3 and copper B (CU(B)). The BNC reduces molecular oxygen to 2 water molecules using 4 electrons from cytochrome c in the IMS and 4 protons from the mitochondrial matrix. This Drosophila ambigua (Fruit fly) protein is Cytochrome c oxidase subunit 2 (mt:CoII).